The following is a 504-amino-acid chain: MEFSVKSGSPEKQRSACIVVGVFEPRRLSRAGEQLDEISEGYLSTLLRRGDIEGKIGQVLFLHNVPNVLSERVLLVGCGKERELTETQYKQIIAKTITTLNDTGALEAICFLSELHIKGRDTYWAVRQATEATQDCLYNFDKFKTNKENTRRPLRKLTFNVTSRKELARAELGLQHALAVASGAKACKDLANMPPNICTPLYLSEQAIALGQRFEKITTEIVDSEQMAELKMDSYLAVAKGSANPAYMSLMHYNGGNADQKPIVLVGKGLTFDSGGISLKPGEAMDEMKYDMGGAASVFGAMKALAKLNLPINVIGILAGAENMPAGNAYRPGDILTTMSGQTVEVLNTDAEGRLVLCDVLTYVERFEPDCVVDIATLTGACIMALGHHISGLMTPHKGLANELLSASNQSSDKAWQLPMDDEFQKQLESPFADMANIGGRPAGSITAACFLSRFTKSYTWAHLDVAGTAWRSGANKGSTGRPVSLLTQFLINRSENETTAVNS.

Residues K268 and D273 each contribute to the Mn(2+) site. K280 is a catalytic residue. Residues D291, D350, and E352 each contribute to the Mn(2+) site. Residue R354 is part of the active site.

Belongs to the peptidase M17 family. Mn(2+) serves as cofactor.

It is found in the cytoplasm. It catalyses the reaction Release of an N-terminal amino acid, Xaa-|-Yaa-, in which Xaa is preferably Leu, but may be other amino acids including Pro although not Arg or Lys, and Yaa may be Pro. Amino acid amides and methyl esters are also readily hydrolyzed, but rates on arylamides are exceedingly low.. The catalysed reaction is Release of an N-terminal amino acid, preferentially leucine, but not glutamic or aspartic acids.. Functionally, presumably involved in the processing and regular turnover of intracellular proteins. Catalyzes the removal of unsubstituted N-terminal amino acids from various peptides. This is Probable cytosol aminopeptidase from Psychromonas ingrahamii (strain DSM 17664 / CCUG 51855 / 37).